Consider the following 185-residue polypeptide: MGLLSIIRKIKKKEKEMRILMVGLDNSGKTTIVLKINGEDTSVISPTLGFNIKTIIYQKYTLNIWDVGGQKTIRSYWRNYFEQTDGLVWVVDSSDLRRLDDCKMELDNLLKEERLAGSSLLILANKQDIQGALTPDEIGKVLNLESMDKSRHWKIVGCSAYTGEGLLEGFDWLVQDIASRIYMLD.

Residue Gly-2 is the site of N-myristoyl glycine attachment. GTP contacts are provided by residues Gly-23–Thr-30, Asp-66–Gln-70, and Asn-125–Asp-128.

This sequence belongs to the small GTPase superfamily. Arf family. In terms of assembly, supercomplex made of cofactors A to E. Cofactors A and D function by capturing and stabilizing tubulin in a quasi-native conformation. Cofactor E binds to the cofactor D-tubulin complex; interaction with cofactor C then causes the release of tubulin polypeptides that are committed to the native state. In terms of tissue distribution, expressed in seedlings, leaves, roots and inflorescences.

The protein localises to the cytoplasm. Functionally, has a role in the cofactor-dependent pathway of microtubule biogenesis. Not essential for cell viability. May play a regulatory role in sequestring TFCD. The chain is ADP-ribosylation factor-like protein 2 (ARL2) from Arabidopsis thaliana (Mouse-ear cress).